A 270-amino-acid chain; its full sequence is Shikimate dehydrogenase (NADP(+)) (270 aa).

Shikimate-binding positions include Ser15–Ser17 and Thr62. The active-site Proton acceptor is Lys66. Asn87 and Asp102 together coordinate shikimate. NADP(+) contacts are provided by residues Gly126–Ser130, Asn149–Arg154, and Ile210. Tyr212 lines the shikimate pocket. Gly233 provides a ligand contact to NADP(+).

Belongs to the shikimate dehydrogenase family. As to quaternary structure, homodimer.

It catalyses the reaction shikimate + NADP(+) = 3-dehydroshikimate + NADPH + H(+). The protein operates within metabolic intermediate biosynthesis; chorismate biosynthesis; chorismate from D-erythrose 4-phosphate and phosphoenolpyruvate: step 4/7. Functionally, involved in the biosynthesis of the chorismate, which leads to the biosynthesis of aromatic amino acids. Catalyzes the reversible NADPH linked reduction of 3-dehydroshikimate (DHSA) to yield shikimate (SA). The chain is Shikimate dehydrogenase (NADP(+)) from Hyphomonas neptunium (strain ATCC 15444).